A 102-amino-acid chain; its full sequence is Small ribosomal subunit protein uS14 (102 aa).

Belongs to the universal ribosomal protein uS14 family. In terms of assembly, part of the 30S ribosomal subunit. Contacts proteins S3 and S10.

Functionally, binds 16S rRNA, required for the assembly of 30S particles and may also be responsible for determining the conformation of the 16S rRNA at the A site. The chain is Small ribosomal subunit protein uS14 from Wolbachia pipientis wMel.